We begin with the raw amino-acid sequence, 236 residues long: Orotidine 5'-phosphate decarboxylase (236 aa).

Substrate-binding positions include Asp17, Lys39, 66-75, Thr125, Arg186, Gln195, Gly215, and Arg216; that span reads DLKFHDIPNT. The active-site Proton donor is Lys68.

This sequence belongs to the OMP decarboxylase family. Type 1 subfamily. Homodimer.

The enzyme catalyses orotidine 5'-phosphate + H(+) = UMP + CO2. Its pathway is pyrimidine metabolism; UMP biosynthesis via de novo pathway; UMP from orotate: step 2/2. Catalyzes the decarboxylation of orotidine 5'-monophosphate (OMP) to uridine 5'-monophosphate (UMP). The sequence is that of Orotidine 5'-phosphate decarboxylase from Buchnera aphidicola subsp. Acyrthosiphon pisum (strain 5A).